We begin with the raw amino-acid sequence, 329 residues long: Malate dehydrogenase (329 aa).

12–18 (GAAGQIC) serves as a coordination point for NAD(+). Positions 95 and 101 each coordinate substrate. NAD(+) is bound by residues Asn-108, Gln-115, and 132 to 134 (VGN). Residues Asn-134 and Arg-165 each contribute to the substrate site. Catalysis depends on His-190, which acts as the Proton acceptor.

This sequence belongs to the LDH/MDH superfamily. MDH type 2 family. Homodimer.

It carries out the reaction (S)-malate + NAD(+) = oxaloacetate + NADH + H(+). Its function is as follows. Catalyzes the reversible oxidation of malate to oxaloacetate. The polypeptide is Malate dehydrogenase (Aquaspirillum arcticum).